Consider the following 167-residue polypeptide: G/U mismatch-specific DNA glycosylase (167 aa).

This sequence belongs to the uracil-DNA glycosylase (UDG) superfamily. TDG/mug family. As to quaternary structure, binds DNA as a monomer.

It is found in the cytoplasm. The enzyme catalyses Specifically hydrolyzes mismatched double-stranded DNA and polynucleotides, releasing free uracil.. Excises ethenocytosine and uracil, which can arise by alkylation or deamination of cytosine, respectively, from the corresponding mispairs with guanine in ds-DNA. It is capable of hydrolyzing the carbon-nitrogen bond between the sugar-phosphate backbone of the DNA and the mispaired base. The complementary strand guanine functions in substrate recognition. Required for DNA damage lesion repair in stationary-phase cells. The sequence is that of G/U mismatch-specific DNA glycosylase from Pectobacterium atrosepticum (strain SCRI 1043 / ATCC BAA-672) (Erwinia carotovora subsp. atroseptica).